The sequence spans 425 residues: Enolase (425 aa).

Glutamine 163 is a binding site for (2R)-2-phosphoglycerate. Glutamate 205 functions as the Proton donor in the catalytic mechanism. Mg(2+)-binding residues include aspartate 242, glutamate 286, and aspartate 313. Residues lysine 338, arginine 367, serine 368, and lysine 389 each contribute to the (2R)-2-phosphoglycerate site. Residue lysine 338 is the Proton acceptor of the active site.

This sequence belongs to the enolase family. Mg(2+) is required as a cofactor.

It localises to the cytoplasm. It is found in the secreted. Its subcellular location is the cell surface. It catalyses the reaction (2R)-2-phosphoglycerate = phosphoenolpyruvate + H2O. Its pathway is carbohydrate degradation; glycolysis; pyruvate from D-glyceraldehyde 3-phosphate: step 4/5. In terms of biological role, catalyzes the reversible conversion of 2-phosphoglycerate (2-PG) into phosphoenolpyruvate (PEP). It is essential for the degradation of carbohydrates via glycolysis. The chain is Enolase from Helicobacter hepaticus (strain ATCC 51449 / 3B1).